The chain runs to 441 residues: Argininosuccinate lyase (441 aa).

The protein belongs to the lyase 1 family. Argininosuccinate lyase subfamily.

It localises to the cytoplasm. The enzyme catalyses 2-(N(omega)-L-arginino)succinate = fumarate + L-arginine. Its pathway is amino-acid biosynthesis; L-arginine biosynthesis; L-arginine from L-ornithine and carbamoyl phosphate: step 3/3. This Thermoanaerobacter pseudethanolicus (strain ATCC 33223 / 39E) (Clostridium thermohydrosulfuricum) protein is Argininosuccinate lyase.